The primary structure comprises 326 residues: tRNA N6-adenosine threonylcarbamoyltransferase (326 aa).

Residues His-111 and His-115 each contribute to the Fe cation site. Substrate-binding positions include 134-138, Asp-167, Gly-180, Asp-184, and Asn-268; that span reads TVSGG. Position 293 (Asp-293) interacts with Fe cation.

This sequence belongs to the KAE1 / TsaD family. It depends on Fe(2+) as a cofactor.

Its subcellular location is the cytoplasm. The catalysed reaction is L-threonylcarbamoyladenylate + adenosine(37) in tRNA = N(6)-L-threonylcarbamoyladenosine(37) in tRNA + AMP + H(+). Functionally, required for the formation of a threonylcarbamoyl group on adenosine at position 37 (t(6)A37) in tRNAs that read codons beginning with adenine. Is involved in the transfer of the threonylcarbamoyl moiety of threonylcarbamoyl-AMP (TC-AMP) to the N6 group of A37, together with TsaE and TsaB. TsaD likely plays a direct catalytic role in this reaction. The protein is tRNA N6-adenosine threonylcarbamoyltransferase of Dehalococcoides mccartyi (strain ATCC BAA-2100 / JCM 16839 / KCTC 5957 / BAV1).